The sequence spans 682 residues: Glutamine--fructose-6-phosphate aminotransferase [isomerizing] 2 (682 aa).

Residue C2 is the For GATase activity of the active site. The region spanning 2 to 288 is the Glutamine amidotransferase type-2 domain; the sequence is CGIFAYMNYR…DDDIAAVADG (287 aa). A Phosphoserine modification is found at S244. SIS domains are found at residues 360–499 and 531–672; these read HLKE…DRIS and LALE…VDFP. Residues 377–378, 422–424, T427, and H578 contribute to the substrate site; these read TS and SQS.

It carries out the reaction D-fructose 6-phosphate + L-glutamine = D-glucosamine 6-phosphate + L-glutamate. Its pathway is nucleotide-sugar biosynthesis; UDP-N-acetyl-alpha-D-glucosamine biosynthesis; alpha-D-glucosamine 6-phosphate from D-fructose 6-phosphate: step 1/1. Functionally, controls the flux of glucose into the hexosamine pathway. Most likely involved in regulating the availability of precursors for N- and O-linked glycosylation of proteins. In Mus musculus (Mouse), this protein is Glutamine--fructose-6-phosphate aminotransferase [isomerizing] 2 (Gfpt2).